Here is a 471-residue protein sequence, read N- to C-terminus: Eremophilane O-acetyltransferase ORF8 (471 aa).

This sequence belongs to the fumigaclavine B O-acetyltransferase family. In terms of assembly, monomer.

Its pathway is sesquiterpene biosynthesis. In terms of biological role, O-acetyltransferase; part of the gene cluster that mediates the biosynthesis of PR-toxin, a bicyclic sesquiterpene belonging to the eremophilane class and acting as a mycotoxin. The first step of the pathway is catalyzed by the aristolochene synthase which performs the cyclization of trans,trans-farnesyl diphosphate (FPP) to the bicyclic sesquiterpene aristolochene. Following the formation of aristolochene, the non-oxygenated aristolochene is converted to the trioxygenated intermediate eremofortin B, via 7-epi-neopetasone. This conversion appears to involve three enzymes, a hydroxysterol oxidase-like enzyme, the quinone-oxidase prx3 that forms the quinone-type-structure in the bicyclic nucleus of aristolochene with the C8-oxo group and the C-3 hydroxyl group, and the P450 monooxygenase ORF6 that introduces the epoxide at the double bond between carbons 1 and 2. No monoxy or dioxy-intermediates have been reported to be released to the broth, so these three early oxidative reactions may be coupled together. Eremofortin B is further oxidized by another P450 monooxygenase, that introduces a second epoxide between carbons 7 and 11 prior to acetylation to eremofortin A by the acetyltransferase ORF8. The second epoxidation may be performed by a second P450 monooxygenase. After the acetylation step, eremofortin A is converted to eremofortin C and then to PR-toxin. First the conversion of eremofortin A to eremofortin C proceeds by oxidation of the side chain of the molecule at C-12 and is catalyzed by the short-chain oxidoreductase prx1. The cytochrome P450 monooxygenase ORF6 is probably also involved in this step. The primary alcohol formed at C-12 is finally oxidized by the short-chain alcohol dehydrogenase prx4 that forms PR-toxin. The protein is Eremophilane O-acetyltransferase ORF8 of Penicillium roqueforti (strain FM164).